The primary structure comprises 443 residues: Trigger factor (443 aa).

The region spanning 161-246 is the PPIase FKBP-type domain; that stretch reads GDKVVIDFQG…IKKIMEGKLP (86 aa).

This sequence belongs to the FKBP-type PPIase family. Tig subfamily.

The protein resides in the cytoplasm. It catalyses the reaction [protein]-peptidylproline (omega=180) = [protein]-peptidylproline (omega=0). Involved in protein export. Acts as a chaperone by maintaining the newly synthesized protein in an open conformation. Functions as a peptidyl-prolyl cis-trans isomerase. The protein is Trigger factor of Legionella pneumophila subsp. pneumophila (strain Philadelphia 1 / ATCC 33152 / DSM 7513).